Consider the following 429-residue polypeptide: Adenylosuccinate synthetase (429 aa).

Residues 12–18 and 40–42 contribute to the GTP site; these read GDEGKGK and GHT. The active-site Proton acceptor is the aspartate 13. Mg(2+) is bound by residues aspartate 13 and glycine 40. Residues 13–16, 38–41, threonine 128, arginine 142, glutamine 223, threonine 238, and arginine 302 contribute to the IMP site; these read DEGK and NAGH. The active-site Proton donor is histidine 41. 298-304 provides a ligand contact to substrate; the sequence is VNTGRKR. Residues arginine 304, 330–332, and 412–414 each bind GTP; these read KLD and GVG.

It belongs to the adenylosuccinate synthetase family. Homodimer. Requires Mg(2+) as cofactor.

The protein resides in the cytoplasm. The catalysed reaction is IMP + L-aspartate + GTP = N(6)-(1,2-dicarboxyethyl)-AMP + GDP + phosphate + 2 H(+). It functions in the pathway purine metabolism; AMP biosynthesis via de novo pathway; AMP from IMP: step 1/2. Plays an important role in the de novo pathway of purine nucleotide biosynthesis. Catalyzes the first committed step in the biosynthesis of AMP from IMP. The polypeptide is Adenylosuccinate synthetase (Corynebacterium diphtheriae (strain ATCC 700971 / NCTC 13129 / Biotype gravis)).